We begin with the raw amino-acid sequence, 74 residues long: uncharacterized protein (74 aa).

This is an uncharacterized protein from Acidianus hospitalis (AFV-1).